Here is a 179-residue protein sequence, read N- to C-terminus: MVKLVVGIGNPGRQYVWTRHNIGFLLLDSLASRFLGAFREAPRLYASFAKVEISSEAVVLMKPTTYVNLTGKAVLAAKKFFDVSMEDILVVADDINREFGFVRFRQDCGSGGHNGIKNTTQILQSNHYWQLRLGVGRPSYPGAEGVADYVLSSFSLNEKEKLNDFLEKGIEEIFPWLGC.

Tyr-15 is a binding site for tRNA. The active-site Proton acceptor is His-20. 3 residues coordinate tRNA: Tyr-66, Asn-68, and Asn-114.

It belongs to the PTH family. Monomer.

Its subcellular location is the cytoplasm. It catalyses the reaction an N-acyl-L-alpha-aminoacyl-tRNA + H2O = an N-acyl-L-amino acid + a tRNA + H(+). Its function is as follows. Hydrolyzes ribosome-free peptidyl-tRNAs (with 1 or more amino acids incorporated), which drop off the ribosome during protein synthesis, or as a result of ribosome stalling. In terms of biological role, catalyzes the release of premature peptidyl moieties from peptidyl-tRNA molecules trapped in stalled 50S ribosomal subunits, and thus maintains levels of free tRNAs and 50S ribosomes. The polypeptide is Peptidyl-tRNA hydrolase (Chlamydia trachomatis serovar L2b (strain UCH-1/proctitis)).